Reading from the N-terminus, the 101-residue chain is ATP-dependent Clp protease adapter protein ClpS (101 aa).

This sequence belongs to the ClpS family. In terms of assembly, binds to the N-terminal domain of the chaperone ClpA.

Involved in the modulation of the specificity of the ClpAP-mediated ATP-dependent protein degradation. This Clostridium acetobutylicum (strain ATCC 824 / DSM 792 / JCM 1419 / IAM 19013 / LMG 5710 / NBRC 13948 / NRRL B-527 / VKM B-1787 / 2291 / W) protein is ATP-dependent Clp protease adapter protein ClpS.